A 277-amino-acid polypeptide reads, in one-letter code: Probable enoyl-CoA hydratase, mitochondrial (277 aa).

The N-terminal 42 residues, 1 to 42 (MLKQVIKTVSSSQAPKKYFFKQFCTSTTEKKGRVGLVTLNRP), are a transit peptide targeting the mitochondrion. Residues 85–88 (ADIK) and Gly-128 each bind substrate.

Belongs to the enoyl-CoA hydratase/isomerase family. Homohexamer; dimer of trimers.

It is found in the mitochondrion matrix. The enzyme catalyses a (3S)-3-hydroxyacyl-CoA = a (2E)-enoyl-CoA + H2O. The catalysed reaction is a 4-saturated-(3S)-3-hydroxyacyl-CoA = a (3E)-enoyl-CoA + H2O. It carries out the reaction (3S)-3-hydroxybutanoyl-CoA = (2E)-butenoyl-CoA + H2O. It catalyses the reaction 3-hydroxyisovaleryl-CoA = 3-methylbut-2-enoyl-CoA + H2O. The enzyme catalyses 3-hydroxypropanoyl-CoA = acryloyl-CoA + H2O. The catalysed reaction is 3-hydroxybutanoyl-CoA = (2E)-butenoyl-CoA + H2O. It participates in lipid metabolism; fatty acid beta-oxidation. Straight-chain enoyl-CoA thioesters from C4 up to at least C16 are processed, although with decreasing catalytic rate. The chain is Probable enoyl-CoA hydratase, mitochondrial (echs1) from Dictyostelium discoideum (Social amoeba).